Reading from the N-terminus, the 314-residue chain is Olfactory receptor 5B17 (314 aa).

At 1–23 (MENNTEVSEFILLGLTNAPELQV) the chain is on the extracellular side. Asparagine 3 carries an N-linked (GlcNAc...) asparagine glycan. The chain crosses the membrane as a helical span at residues 24-44 (PLFIMFTLIYLITLTGNLGMI). At 45 to 52 (ILILLDSH) the chain is on the cytoplasmic side. The helical transmembrane segment at 53–73 (LHTPMYFFLSNLSLAGIGYSS) threads the bilayer. The Extracellular segment spans residues 74–97 (AVTPKVLTGLLIEDKAISYSACAA). Cysteine 95 and cysteine 187 are disulfide-bonded. The chain crosses the membrane as a helical span at residues 98–118 (QMFFCAVFATVENYLLSSMAY). The Cytoplasmic portion of the chain corresponds to 119–137 (DRYAAVCNPLHYTTTMTTR). A helical transmembrane segment spans residues 138–158 (VCACLAIGCYVIGFLNASIQI). Over 159 to 194 (GDTFRLSFCMSNVIHHFFCDKPAVITLTCSEKHISE) the chain is Extracellular. The helical transmembrane segment at 195-215 (LILVLISSFNVFFALLVTLIS) threads the bilayer. Topologically, residues 216–235 (YLFILITILKRHTGKGYQKP) are cytoplasmic. Residues 236–256 (LSTCGSHLIAIFLFYITVIIM) traverse the membrane as a helical segment. Residues 257-269 (YIRPSSSHSMDTD) are Extracellular-facing. A helical transmembrane segment spans residues 270–290 (KIASVFYTMIIPMLSPIVYTL). Over 291 to 314 (RNKDVKNAFMKVVEKAKYSLDSVF) the chain is Cytoplasmic.

It belongs to the G-protein coupled receptor 1 family.

It is found in the cell membrane. In terms of biological role, odorant receptor. The sequence is that of Olfactory receptor 5B17 (OR5B17) from Homo sapiens (Human).